We begin with the raw amino-acid sequence, 272 residues long: tRNA pseudouridine synthase A (272 aa).

D51 functions as the Nucleophile in the catalytic mechanism. Substrate is bound at residue Y109.

This sequence belongs to the tRNA pseudouridine synthase TruA family. Homodimer.

It carries out the reaction uridine(38/39/40) in tRNA = pseudouridine(38/39/40) in tRNA. Its function is as follows. Formation of pseudouridine at positions 38, 39 and 40 in the anticodon stem and loop of transfer RNAs. This Verminephrobacter eiseniae (strain EF01-2) protein is tRNA pseudouridine synthase A.